A 698-amino-acid chain; its full sequence is Elongation factor G 1 (698 aa).

A tr-type G domain is found at 8–290 (ERYRNIGIVA…AVVDFLPAPI (283 aa)). GTP contacts are provided by residues 17 to 24 (AHVDAGKT), 88 to 92 (DTPGH), and 142 to 145 (NKMD).

This sequence belongs to the TRAFAC class translation factor GTPase superfamily. Classic translation factor GTPase family. EF-G/EF-2 subfamily.

The protein resides in the cytoplasm. Catalyzes the GTP-dependent ribosomal translocation step during translation elongation. During this step, the ribosome changes from the pre-translocational (PRE) to the post-translocational (POST) state as the newly formed A-site-bound peptidyl-tRNA and P-site-bound deacylated tRNA move to the P and E sites, respectively. Catalyzes the coordinated movement of the two tRNA molecules, the mRNA and conformational changes in the ribosome. This chain is Elongation factor G 1, found in Shewanella frigidimarina (strain NCIMB 400).